The primary structure comprises 292 residues: MHPARPALWAAALTALTLLRGPPVARAGAGAVGAGPVVRCEPCDARALAQCAPPPTAPACTELVREPGCGCCLTCALREGDACGVYTERCGTGLRCQPRPAEQYPLKALLNGRGFCANASAASNLSAYLPSQPSPGNTTESEEDHNAGSVESQVVPSTHRVTDSKFHPLHSKMEVIIKGQARDSQRYKVDYESQSTDTQNFSSESKRETEYGPCRREMEDTLNHLKFLNVLSPRGVHIPNCDKKGFYKKKQCRPSKGRKRGFCWCVDKYGQPLPGYDTKGKDDVHCLSVQSQ.

A signal peptide spans 1-27; that stretch reads MHPARPALWAAALTALTLLRGPPVARA. The 84-residue stretch at 36-119 folds into the IGFBP N-terminal domain; sequence PVVRCEPCDA…LNGRGFCANA (84 aa). 6 disulfide bridges follow: C40–C69, C43–C71, C51–C72, C60–C75, C83–C96, and C90–C116. N-linked (GlcNAc...) asparagine glycosylation is found at N118, N124, and N137. Disordered regions lie at residues 127–161 and 191–211; these read AYLP…THRV and YESQ…ETEY. Polar residues predominate over residues 129 to 139; the sequence is LPSQPSPGNTT. The residue at position 149 (S149) is a Phosphoserine. Residues 192-203 are compositionally biased toward polar residues; it reads ESQSTDTQNFSS. A glycan (N-linked (GlcNAc...) asparagine) is linked at N200. Position 202 is a phosphoserine (S202). Residues 211 to 286 enclose the Thyroglobulin type-1 domain; it reads YGPCRREMED…DTKGKDDVHC (76 aa). 3 disulfide bridges follow: C214/C241, C252/C263, and C265/C286.

As to quaternary structure, interacts with XLKD1. Binds IGF2 more than IGF1. Forms a ternary complex of about 140 to 150 kDa with IGF1 or IGF2 and a 85 kDa glycoprotein (ALS). Interacts with humanin; humanin competes with importin KPNB1 for binding to IGFBP3, blocking IGFBP3 nuclear import and IGFBP3-mediated apoptosis. Interacts with TMEM219. Interacts with RXRA; this interaction modulates the transcriptional activity of RXRA. Interacts with LRP1; this interaction mediates cell growth inhibition independent of IGF1. Post-translationally, phosphorylated by FAM20C in the extracellular medium. Phosphorylated by CK2; resulting in decreased nuclear localization.

Its subcellular location is the secreted. It is found in the nucleus. In terms of biological role, multifunctional protein that plays a critical role in regulating the availability of IGFs such as IGF1 and IGF2 to their receptors and thereby regulates IGF-mediated cellular processes including proliferation, differentiation, and apoptosis in a cell-type specific manner. Also exhibits IGF-independent antiproliferative and apoptotic effects mediated by its receptor TMEM219/IGFBP-3R. Inhibits the positive effect of humanin on insulin sensitivity. Promotes testicular germ cell apoptosis. Acts via LRP-1/alpha2M receptor, also known as TGF-beta type V receptor, to mediate cell growth inhibition independent of IGF1. Mechanistically, induces serine-specific dephosphorylation of IRS1 or IRS2 upon ligation to its receptor, leading to the inhibitory cascade. In the nucleus, interacts with transcription factors such as retinoid X receptor-alpha/RXRA to regulate transcriptional signaling and apoptosis. In Rattus norvegicus (Rat), this protein is Insulin-like growth factor-binding protein 3 (Igfbp3).